The primary structure comprises 112 residues: Protein Churchill (112 aa).

Residues C2, C5, C30, C33, H59, C61, C64, H66, H71, C88, and C91 each coordinate Zn(2+).

The protein belongs to the Churchill family.

Functionally, transcriptional activator that mediates FGF signaling during neural development. Plays a role in the regulation of cell movement. Does not bind DNA by itself. The protein is Protein Churchill (CHURC1) of Bos taurus (Bovine).